A 404-amino-acid polypeptide reads, in one-letter code: Chorismate synthase (404 aa).

Arg47 serves as a coordination point for NADP(+). FMN contacts are provided by residues 156 to 158, 281 to 282, Gly321, 336 to 340, and Arg363; these read RSS, NA, and KPTST.

It belongs to the chorismate synthase family. Homotetramer. The cofactor is FMNH2.

It carries out the reaction 5-O-(1-carboxyvinyl)-3-phosphoshikimate = chorismate + phosphate. Its pathway is metabolic intermediate biosynthesis; chorismate biosynthesis; chorismate from D-erythrose 4-phosphate and phosphoenolpyruvate: step 7/7. Catalyzes the anti-1,4-elimination of the C-3 phosphate and the C-6 proR hydrogen from 5-enolpyruvylshikimate-3-phosphate (EPSP) to yield chorismate, which is the branch point compound that serves as the starting substrate for the three terminal pathways of aromatic amino acid biosynthesis. This reaction introduces a second double bond into the aromatic ring system. The sequence is that of Chorismate synthase from Rhodopirellula baltica (strain DSM 10527 / NCIMB 13988 / SH1).